A 203-amino-acid chain; its full sequence is Large ribosomal subunit protein bL25 (203 aa).

The segment at 182–203 (EITEEPETEEKKEEGASSVSNS) is disordered.

Belongs to the bacterial ribosomal protein bL25 family. CTC subfamily. In terms of assembly, part of the 50S ribosomal subunit; part of the 5S rRNA/L5/L18/L25 subcomplex. Contacts the 5S rRNA. Binds to the 5S rRNA independently of L5 and L18.

Functionally, this is one of the proteins that binds to the 5S RNA in the ribosome where it forms part of the central protuberance. This chain is Large ribosomal subunit protein bL25, found in Caldicellulosiruptor saccharolyticus (strain ATCC 43494 / DSM 8903 / Tp8T 6331).